The following is a 171-amino-acid chain: Zinc uptake regulation protein (171 aa).

It belongs to the Fur family.

In terms of biological role, acts as a negative controlling element, employing Zn(2+) as a cofactor to bind the operator of the repressed genes (znuACB). This chain is Zinc uptake regulation protein (zur), found in Escherichia coli (strain K12).